The sequence spans 291 residues: 3-hydroxy-5-phosphonooxypentane-2,4-dione thiolase (291 aa).

Lys203 serves as the catalytic Schiff-base intermediate with substrate.

This sequence belongs to the DeoC/FbaB aldolase family. As to quaternary structure, homodecamer.

Its subcellular location is the cytoplasm. The catalysed reaction is dihydroxyacetone phosphate + acetyl-CoA = 3-hydroxy-2,4-dioxopentyl phosphate + CoA. In terms of biological role, involved in the degradation of phospho-AI-2, thereby terminating induction of the lsr operon and closing the AI-2 signaling cycle. Catalyzes the transfer of an acetyl moiety from 3-hydroxy-5-phosphonooxypentane-2,4-dione to CoA to form glycerone phosphate and acetyl-CoA. The chain is 3-hydroxy-5-phosphonooxypentane-2,4-dione thiolase from Yersinia pestis bv. Antiqua (strain Antiqua).